A 341-amino-acid polypeptide reads, in one-letter code: Alpha-ketoglutarate-dependent dioxygenase oryG (341 aa).

His-100 is a substrate binding site. The Fe cation site is built by His-140 and Asp-142. Thr-167 provides a ligand contact to 2-oxoglutarate. His-299 lines the Fe cation pocket. Positions 311 and 315 each coordinate 2-oxoglutarate. A substrate-binding site is contributed by Arg-315.

The protein belongs to the TfdA dioxygenase family. Fe(2+) is required as a cofactor.

It participates in secondary metabolite biosynthesis. Its function is as follows. Alpha-ketoglutarate-dependent dioxygenase; part of the gene cluster that mediates the biosynthesis of oryzines, natural products with an unusual maleidride backbone. The two subunits of the fungal fatty acid synthase oryfasA and oryfasB probably form octenoic acid. This fatty acid is most likely activated by the acyl-CoA ligase oryP to give octenyl-CoA before the citrate synthase-like protein oryE catalyzes condensation with oxaloacetate to form tricarboxylic acid. The next steps of the pathways are conjectural, but a favorite possible route has been proposed, beginning with decarboxylation and concomitant dehydration by the decarboxylase oryM, followed by tautomerization, which may lead to the production of a diene intermediate. Reduction of this diene intermediate could give the known metabolite piliformic acid. On the pathway to oryzine B and oryzine A, however, hydroxylation of the diene by the alpha-ketoglutarate-dependent dioxygenase oryG and lactonisation by the lactonohydrolases oryH or oryL could give oryzine B directly. Finally, enoyl reduction by the dehydrogenase oryD would then convert oryzine B into oryzine A. The sequence is that of Alpha-ketoglutarate-dependent dioxygenase oryG from Aspergillus oryzae (strain ATCC 42149 / RIB 40) (Yellow koji mold).